The sequence spans 1056 residues: Isoleucine--tRNA ligase (1056 aa).

Residues 56-66 (PFATGLPHYGH) carry the 'HIGH' region motif. The short motif at 603 to 607 (KMSKS) is the 'KMSKS' region element. K606 serves as a coordination point for ATP.

This sequence belongs to the class-I aminoacyl-tRNA synthetase family. IleS type 2 subfamily. Monomer. Zn(2+) serves as cofactor.

Its subcellular location is the cytoplasm. The catalysed reaction is tRNA(Ile) + L-isoleucine + ATP = L-isoleucyl-tRNA(Ile) + AMP + diphosphate. Functionally, catalyzes the attachment of isoleucine to tRNA(Ile). As IleRS can inadvertently accommodate and process structurally similar amino acids such as valine, to avoid such errors it has two additional distinct tRNA(Ile)-dependent editing activities. One activity is designated as 'pretransfer' editing and involves the hydrolysis of activated Val-AMP. The other activity is designated 'posttransfer' editing and involves deacylation of mischarged Val-tRNA(Ile). The sequence is that of Isoleucine--tRNA ligase from Bdellovibrio bacteriovorus (strain ATCC 15356 / DSM 50701 / NCIMB 9529 / HD100).